The chain runs to 437 residues: Elongation factor 1-gamma (437 aa).

An N-acetylalanine modification is found at A2. Residues 2-87 (AAGTLYTYPE…YVSNEELRGS (86 aa)) enclose the GST N-terminal domain. Residues 88–216 (TPEAAAQVVQ…VKLCEKMAQF (129 aa)) enclose the GST C-terminal domain. K147 and K212 each carry N6-acetyllysine. Over residues 221–254 (FAESQPKKDTPRKEKGSREEKQKPQTERKEEKKA) the composition is skewed to basic and acidic residues. The disordered stretch occupies residues 221 to 268 (FAESQPKKDTPRKEKGSREEKQKPQTERKEEKKAAAPAPEEEMDECEQ). A Glycyl lysine isopeptide (Lys-Gly) (interchain with G-Cter in SUMO1) cross-link involves residue K253. Positions 276–437 (AKDPFAHLPK…KAVNQGKIFK (162 aa)) constitute an EF-1-gamma C-terminal domain. K285 participates in a covalent cross-link: Glycyl lysine isopeptide (Lys-Gly) (interchain with G-Cter in SUMO2). K401 carries the N6-acetyllysine modification. K434 carries the N6-acetyllysine; alternate modification. An N6-malonyllysine; alternate modification is found at K434.

As to quaternary structure, EF-1 is composed of four subunits: alpha, beta, delta, and gamma.

In terms of biological role, probably plays a role in anchoring the complex to other cellular components. This chain is Elongation factor 1-gamma (Eef1g), found in Rattus norvegicus (Rat).